The chain runs to 145 residues: MKNMLHPQKYETHVLDDLMEFYEGVIGYPEIDLRLAGEEAWLKGVNPELAEAVKKIIKTIRRYLEGSPYDGSEKPIPRYIIAEIFSQIAPEVQLLVNALDTEGKYGFLKHIKKLNLNSLAMLSKNYNENDKLWKELENEGYVYLE.

The C-terminal tail, binds in the RNAP DNA-binding channel stretch occupies residues 110 to 123; sequence HIKKLNLNSLAMLS.

The protein belongs to the viral ORF131/RIP family. In terms of assembly, interacts with host RNA polymerase (RNAP) subunits Rpo1N and Rpo2.

It is found in the virion. Plays a role in the inhibition of global transcription by interacting with the RNA polymerase (RNAP) clamp, locking it in a fixed position and inhibiting the formation and/or stability of the pre-initiation complex (PIC). Also overlaps with the transcription factor B binding site; overall RIP probably interferes with DNA loading onto RNAP but does not displace DNA once it is loaded. May play a role in virus particle assembly, possibly by dissociating active RNAP from the virus genome. The chain is RNAP inhibitory protein from Acidianus two-tailed virus (ATV).